Here is a 96-residue protein sequence, read N- to C-terminus: Probable RNA-binding protein YqeI (96 aa).

Positions 1 to 96 (MLTGKQKRFL…SKENKQIELP (96 aa)) constitute a CRM domain.

The chain is Probable RNA-binding protein YqeI (yqeI) from Bacillus subtilis (strain 168).